The sequence spans 262 residues: 3-dehydro-D-guloside 4-epimerase (262 aa).

Glu146 acts as the Proton donor/acceptor in catalysis. Mn(2+)-binding residues include Glu146 and Asp179. His182 lines the substrate pocket. His205 lines the Mn(2+) pocket. Arg211 is a substrate binding site. The Proton donor/acceptor role is filled by Glu240. Residue Glu240 coordinates Mn(2+).

Belongs to the hyi family. Mn(2+) is required as a cofactor.

It catalyses the reaction a 3-dehydro-D-guloside = a 3-dehydro-D-glucoside. Functionally, catalyzes the epimerization at C4 of 3-dehydro-D-gulosides leading to 3-dehydro-D-glucosides. Probably functions in a metabolic pathway that transforms D-gulosides to D-glucosides. Can use methyl alpha-3-dehydro-D-glucoside and methyl beta-3-dehydro-D-glucoside as substrates in vitro. However, the actual specific physiological substrates for this metabolic pathway are unknown. Cannot act on D-psicose, D-fructose, D-tagatose, D-sorbose, L-xylulose, or L-ribulose. The sequence is that of 3-dehydro-D-guloside 4-epimerase (ycjR) from Escherichia coli (strain K12).